Consider the following 229-residue polypeptide: Non-structural protein P8 (229 aa).

Residues 14 to 26 form a CCM-I region; it reads MKHNQDRVEELSL. Positions 94-116 are CCM-III; sequence IKRHVNEQILPKLKSDLSELKKK. 2 helical membrane passes run 119–139 and 162–182; these read IIHT…VCTL and SLNP…MVCA. Residues 185-198 form a CCM-II region; it reads ERALNQQIDMIKKE.

The protein belongs to the orbivirus NS3 family. Forms homooligomers via coiled-coil motif. Interacts with host OPTN; this interaction inhibits innate immune response.

It localises to the host cell membrane. The protein localises to the host Golgi apparatus. Its function is as follows. Plays a role in the inhibition of host innate immune response. Interacts with host OPTN and thus inhibits the recruitment of TBK1 to the host Golgi apparatus. In turn, downstream partner IRF3 cannot be activated and IFN-beta production is impaired. In terms of biological role, facilitates viral particle release either by increasing plasma membrane permeability through a viroporin-like activity or by viral budding. In Bluetongue virus 10 (isolate USA) (BTV 10), this protein is Non-structural protein P8 (Segment-10).